The following is a 388-amino-acid chain: Putative 8-amino-7-oxononanoate synthase (388 aa).

Residue Arg-22 participates in substrate binding. Gly-109 to Tyr-110 contacts pyridoxal 5'-phosphate. His-134 provides a ligand contact to substrate. Pyridoxal 5'-phosphate is bound by residues Ser-182, Asp-207–His-210, and Thr-237–Lys-240. Residue Lys-240 is modified to N6-(pyridoxal phosphate)lysine. Thr-354 serves as a coordination point for substrate.

It belongs to the class-II pyridoxal-phosphate-dependent aminotransferase family. BioF subfamily. As to quaternary structure, homodimer. Pyridoxal 5'-phosphate is required as a cofactor.

It catalyses the reaction 6-carboxyhexanoyl-[ACP] + L-alanine + H(+) = (8S)-8-amino-7-oxononanoate + holo-[ACP] + CO2. The protein operates within cofactor biosynthesis; biotin biosynthesis. Functionally, catalyzes the decarboxylative condensation of pimeloyl-[acyl-carrier protein] and L-alanine to produce 8-amino-7-oxononanoate (AON), [acyl-carrier protein], and carbon dioxide. This Gloeobacter violaceus (strain ATCC 29082 / PCC 7421) protein is Putative 8-amino-7-oxononanoate synthase (bioF).